The sequence spans 629 residues: tRNA uridine 5-carboxymethylaminomethyl modification enzyme MnmG (629 aa).

Residue 13–18 participates in FAD binding; sequence GGGHAG. 273–287 contacts NAD(+); it reads GPRYCPSIEDKIHRF.

The protein belongs to the MnmG family. In terms of assembly, homodimer. Heterotetramer of two MnmE and two MnmG subunits. FAD is required as a cofactor.

Its subcellular location is the cytoplasm. NAD-binding protein involved in the addition of a carboxymethylaminomethyl (cmnm) group at the wobble position (U34) of certain tRNAs, forming tRNA-cmnm(5)s(2)U34. This chain is tRNA uridine 5-carboxymethylaminomethyl modification enzyme MnmG, found in Shewanella baltica (strain OS185).